Reading from the N-terminus, the 114-residue chain is T cell receptor beta variable 6-9 (114 aa).

The signal sequence occupies residues 1–21 (MSIGLLCCVAFSLLWAGPVNA). Residues 22–114 (GVTQTPKFHI…TSVYFCASSY (93 aa)) enclose the Ig-like domain. The cysteines at positions 42 and 110 are disulfide-linked. Asparagine 84 carries an N-linked (GlcNAc...) asparagine glycan.

In terms of assembly, alpha-beta TR is a heterodimer composed of an alpha and beta chain; disulfide-linked. The alpha-beta TR is associated with the transmembrane signaling CD3 coreceptor proteins to form the TR-CD3 (TcR or TCR). The assembly of alpha-beta TR heterodimers with CD3 occurs in the endoplasmic reticulum where a single alpha-beta TR heterodimer associates with one CD3D-CD3E heterodimer, one CD3G-CD3E heterodimer and one CD247 homodimer forming a stable octameric structure. CD3D-CD3E and CD3G-CD3E heterodimers preferentially associate with TR alpha and TR beta chains, respectively. The association of the CD247 homodimer is the last step of TcR assembly in the endoplasmic reticulum and is required for transport to the cell surface.

The protein resides in the cell membrane. In terms of biological role, v region of the variable domain of T cell receptor (TR) beta chain that participates in the antigen recognition. Alpha-beta T cell receptors are antigen specific receptors which are essential to the immune response and are present on the cell surface of T lymphocytes. Recognize peptide-major histocompatibility (MH) (pMH) complexes that are displayed by antigen presenting cells (APC), a prerequisite for efficient T cell adaptive immunity against pathogens. Binding of alpha-beta TR to pMH complex initiates TR-CD3 clustering on the cell surface and intracellular activation of LCK that phosphorylates the ITAM motifs of CD3G, CD3D, CD3E and CD247 enabling the recruitment of ZAP70. In turn ZAP70 phosphorylates LAT, which recruits numerous signaling molecules to form the LAT signalosome. The LAT signalosome propagates signal branching to three major signaling pathways, the calcium, the mitogen-activated protein kinase (MAPK) kinase and the nuclear factor NF-kappa-B (NF-kB) pathways, leading to the mobilization of transcription factors that are critical for gene expression and essential for T cell growth and differentiation. The T cell repertoire is generated in the thymus, by V-(D)-J rearrangement. This repertoire is then shaped by intrathymic selection events to generate a peripheral T cell pool of self-MH restricted, non-autoaggressive T cells. Post-thymic interaction of alpha-beta TR with the pMH complexes shapes TR structural and functional avidity. The sequence is that of T cell receptor beta variable 6-9 from Homo sapiens (Human).